The sequence spans 177 residues: ATP-dependent protease subunit HslV (177 aa).

Thr4 is a catalytic residue. Residues Ser159, Cys162, and Thr165 each coordinate Na(+).

The protein belongs to the peptidase T1B family. HslV subfamily. In terms of assembly, a double ring-shaped homohexamer of HslV is capped on each side by a ring-shaped HslU homohexamer. The assembly of the HslU/HslV complex is dependent on binding of ATP.

It localises to the cytoplasm. It carries out the reaction ATP-dependent cleavage of peptide bonds with broad specificity.. With respect to regulation, allosterically activated by HslU binding. In terms of biological role, protease subunit of a proteasome-like degradation complex believed to be a general protein degrading machinery. This chain is ATP-dependent protease subunit HslV, found in Mesorhizobium japonicum (strain LMG 29417 / CECT 9101 / MAFF 303099) (Mesorhizobium loti (strain MAFF 303099)).